The sequence spans 329 residues: Sulfate-binding protein (329 aa).

The N-terminal stretch at 1-19 (MKKWGVGFTLLLASTSILA) is a signal peptide.

This sequence belongs to the prokaryotic sulfate-binding protein family.

The protein localises to the periplasm. Its function is as follows. This protein specifically binds sulfate and is involved in its transmembrane transport. This chain is Sulfate-binding protein (sbp), found in Salmonella typhimurium (strain LT2 / SGSC1412 / ATCC 700720).